Here is an 849-residue protein sequence, read N- to C-terminus: Putative endoplasmic reticulum mannosidase MNL2 (849 aa).

Over 1 to 12 the chain is Cytoplasmic; the sequence is MSIARLVYSLFR. A helical; Signal-anchor for type II membrane protein membrane pass occupies residues 13–32; the sequence is RVRSVLLLFITISLLFYYTF. Residues 33–849 are Lumenal-facing; that stretch reads QNEIDILNSY…TQGGHIIKKK (817 aa). The N-linked (GlcNAc...) asparagine glycan is linked to asparagine 45. The disordered stretch occupies residues 56–79; that stretch reads HNTEGSSKLDPPDLSSTGSDRIAT. A disulfide bridge connects residues cysteine 559 and cysteine 598.

Belongs to the glycosyl hydrolase 47 family. Ca(2+) is required as a cofactor.

The protein resides in the endoplasmic reticulum membrane. The protein operates within protein modification; protein glycosylation. Putative mannosidase involved in glycoprotein quality control since it is involved in the targeting of misfolded glycoproteins for ER-associated protein degradation (ERAD). In Saccharomyces cerevisiae (strain ATCC 204508 / S288c) (Baker's yeast), this protein is Putative endoplasmic reticulum mannosidase MNL2 (MNL2).